The chain runs to 549 residues: Membrane protein insertase YidC (549 aa).

The helical transmembrane segment at 9–29 (LRLILAIALSFLFIALYSYFF) threads the bilayer. Low complexity predominate over residues 37–51 (TETTKQETTNNHTAT). The disordered stretch occupies residues 37 to 56 (TETTKQETTNNHTATSPTAS). A run of 5 helical transmembrane segments spans residues 328-348 (VIEYGLITFFAKGVFVLLDYL), 351-371 (FVGNWGWAIILLTIIVRIILY), 417-437 (GANPLGGCLPLILQIPVFFAI), 452-472 (WVLWIHDLSIMDPYFILPLLM), and 498-518 (LLPLLFTIFLITFPAGLVLYW).

It belongs to the OXA1/ALB3/YidC family. Type 1 subfamily. In terms of assembly, interacts with the Sec translocase complex via SecD. Specifically interacts with transmembrane segments of nascent integral membrane proteins during membrane integration.

It localises to the cell inner membrane. Required for the insertion and/or proper folding and/or complex formation of integral membrane proteins into the membrane. Involved in integration of membrane proteins that insert both dependently and independently of the Sec translocase complex, as well as at least some lipoproteins. Aids folding of multispanning membrane proteins. This Helicobacter pylori (strain J99 / ATCC 700824) (Campylobacter pylori J99) protein is Membrane protein insertase YidC.